A 381-amino-acid chain; its full sequence is Pyrimidine monooxygenase RutA (381 aa).

Residues 66–67 (IK), N132, E141, 157–158 (RY), and S207 contribute to the FMN site.

Belongs to the NtaA/SnaA/DszA monooxygenase family. RutA subfamily.

It carries out the reaction uracil + FMNH2 + NADH + O2 = (Z)-3-ureidoacrylate + FMN + NAD(+) + H2O + H(+). The enzyme catalyses thymine + FMNH2 + NADH + O2 = (Z)-2-methylureidoacrylate + FMN + NAD(+) + H2O + H(+). Functionally, catalyzes the pyrimidine ring opening between N-3 and C-4 by an unusual flavin hydroperoxide-catalyzed mechanism, adding oxygen atoms in the process to yield ureidoacrylate peracid, that immediately reacts with FMN forming ureidoacrylate and FMN-N(5)-oxide. The FMN-N(5)-oxide reacts spontaneously with NADH to produce FMN. Requires the flavin reductase RutF to regenerate FMN in vivo. The sequence is that of Pyrimidine monooxygenase RutA from Methylobacterium radiotolerans (strain ATCC 27329 / DSM 1819 / JCM 2831 / NBRC 15690 / NCIMB 10815 / 0-1).